Reading from the N-terminus, the 419-residue chain is 20-hydroxy-prefusarin hydrolase FUS2 (419 aa).

Residue Ser238 is part of the active site.

This sequence belongs to the AB hydrolase superfamily. FUS2 hydrolase family.

It participates in mycotoxin biosynthesis. Functionally, 20-hydroxy-prefusarin hydrolase; part of the gene cluster that mediates the biosynthesis of the mycotoxin fusarin C. Within the cluster, FUS1, FUS2, FUS8 and FUS9 are sufficient for fusarin production. The roles of the other FUS members are yet undetermined. The fusarin C synthetase FUS1 is responsible for the condensation of one acetyl-coenzyme A (CoA) unit with six malonyl-CoA units and the amide linkage of the arising heptaketide and homoserine, subsequently releasing the first intermediate, prefusarin, as an alcohol with an open ring structure. The cytochrome P450 monooxygenase FUS8 participates in multiple oxidation processes at carbon C-20 and is able to use the FUS1 product as substrate, resulting in formation of 20-hydroxy-prefusarin. This reaction seems to be essential before the 2-pyrrolidone ring closure can be catalyzed by FUS2, generating 20-hydroxy-fusarin. FUS8 is able to further oxidizes carbon C-20 after ring closure, resulting in the formation of carboxy-fusarin C. As the last step, FUS9 methylates the hydroxyl group at C-21 to generate fusarin C. Fusarin C can then rearrange to epi-fusarin C, the (z)-isomers, and fusarin A and fusarin D. This chain is 20-hydroxy-prefusarin hydrolase FUS2, found in Gibberella moniliformis (strain M3125 / FGSC 7600) (Maize ear and stalk rot fungus).